Reading from the N-terminus, the 313-residue chain is Ribosomal protein L11 methyltransferase (313 aa).

Residues threonine 161, glycine 182, aspartate 204, and asparagine 247 each coordinate S-adenosyl-L-methionine.

The protein belongs to the methyltransferase superfamily. PrmA family.

It localises to the cytoplasm. It catalyses the reaction L-lysyl-[protein] + 3 S-adenosyl-L-methionine = N(6),N(6),N(6)-trimethyl-L-lysyl-[protein] + 3 S-adenosyl-L-homocysteine + 3 H(+). Methylates ribosomal protein L11. The polypeptide is Ribosomal protein L11 methyltransferase (Halalkalibacterium halodurans (strain ATCC BAA-125 / DSM 18197 / FERM 7344 / JCM 9153 / C-125) (Bacillus halodurans)).